Reading from the N-terminus, the 272-residue chain is Glucosyl-3-phosphoglycerate/mannosyl-3-phosphoglycerate phosphatase (272 aa).

The active-site Nucleophile is Asp8. Residues Asp8, Asp10, and Asp214 each contribute to the Mg(2+) site.

The protein belongs to the HAD-like hydrolase superfamily. MPGP family. Monomer. It depends on Co(2+) as a cofactor. Mg(2+) serves as cofactor. Requires Ni(2+) as cofactor.

The catalysed reaction is (2R)-2-O-(alpha-D-glucopyranosyl)-3-phospho-glycerate + H2O = (2R)-2-O-(alpha-D-glucopyranosyl)-glycerate + phosphate. It carries out the reaction 2-O-(alpha-D-mannosyl)-3-phosphoglycerate + H2O = (2R)-2-O-(alpha-D-mannosyl)-glycerate + phosphate. Functionally, involved in the biosynthesis of glucosylglycerate. Catalyzes the dephosphorylation of glucosyl-3-phosphoglycerate (GPG) and mannosyl-3-phosphoglycerate (MPG) to glucosylglycerate (GG) and mannosylglycerate (MG), respectively. The protein is Glucosyl-3-phosphoglycerate/mannosyl-3-phosphoglycerate phosphatase of Methanococcoides burtonii (strain DSM 6242 / NBRC 107633 / OCM 468 / ACE-M).